The sequence spans 295 residues: sn-glycerol-3-phosphate transport system permease protein UgpA (295 aa).

Over Met-1–Arg-11 the chain is Cytoplasmic. The helical transmembrane segment at Trp-12 to Pro-32 threads the bilayer. At Ala-33–Thr-80 the chain is on the periplasmic side. Residues Ile-76–Gln-284 enclose the ABC transmembrane type-1 domain. Residues Phe-81–Val-101 form a helical membrane-spanning segment. The Cytoplasmic segment spans residues Arg-102 to Thr-109. The helical transmembrane segment at Leu-110–Phe-130 threads the bilayer. Over Asn-131–Gln-156 the chain is Periplasmic. A helical membrane pass occupies residues Ala-157–Phe-177. The Cytoplasmic segment spans residues Tyr-178 to Ala-207. A helical transmembrane segment spans residues Leu-208–Phe-228. Residues Asp-229–Asp-262 lie on the Periplasmic side of the membrane. A helical transmembrane segment spans residues Leu-263 to Val-283. Residues Gln-284 to Gln-295 lie on the Cytoplasmic side of the membrane.

The protein belongs to the binding-protein-dependent transport system permease family. UgpAE subfamily. As to quaternary structure, the complex is composed of two ATP-binding proteins (UgpC), two transmembrane proteins (UgpA and UgpE) and a solute-binding protein (UgpB).

It localises to the cell inner membrane. Functionally, part of the ABC transporter complex UgpBAEC involved in sn-glycerol-3-phosphate (G3P) import. Probably responsible for the translocation of the substrate across the membrane. This is sn-glycerol-3-phosphate transport system permease protein UgpA (ugpA) from Escherichia coli O6:K15:H31 (strain 536 / UPEC).